The following is a 723-amino-acid chain: Malonamoyl-CoA synthetase vrtB (723 aa).

This sequence belongs to the ATP-dependent AMP-binding enzyme family.

It functions in the pathway secondary metabolite biosynthesis; terpenoid biosynthesis. Malonamoyl-CoA synthetase; part of the gene cluster that mediates the biosynthesis of viridicatumtoxin, a tetracycline-like fungal meroterpenoid with a unique, fused spirobicyclic ring system. The first step of the pathway is the production of the malonamoyl-CoA starter unit for the polyketide synthase vrtA. The aldolase vrtJ may be involved in the synthesis of the malonamate substrate for malonamoyl-CoA synthetase vrtB. The polyketide synthase vrtA then may utilize the malonamoyl-CoA starter unit, followed by sequential condensation of eight malonyl-CoA units to form the polyketide backbone. The cyclization of the last ring could be mediated by the lactamase-like protein vrtG. The proposed post-PKS tailoring steps are a hydroxylation at C5 catalyzed the cytochrome P450 monooxygenase vrtE, a hydroxylation at C12a catalyzed by VrtH and/or VrtI, and an O-methylation by the O-methyltransferase vrtF. VrtC is then proposed to catalyze the transfer of a geranyl group synthesized by vrtD to the aromatic C ring of the tetracyclic polyketide intermediate of viridicatumtoxin to yield previridicatumtoxin. Finally, the cytochrome P450 monooxygenase vrtK catalyzes the spirocyclization of the geranyl moiety of previridicatumtoxin to afford viridicatumtoxin. The polypeptide is Malonamoyl-CoA synthetase vrtB (Penicillium aethiopicum).